A 470-amino-acid chain; its full sequence is Ribulose bisphosphate carboxylase large chain (470 aa).

Substrate is bound by residues Asn115 and Thr165. Lys167 functions as the Proton acceptor in the catalytic mechanism. Lys169 is a substrate binding site. 3 residues coordinate Mg(2+): Lys193, Asp195, and Glu196. N6-carboxylysine is present on Lys193. His286 functions as the Proton acceptor in the catalytic mechanism. Residues Arg287, His319, and Ser371 each contribute to the substrate site.

The protein belongs to the RuBisCO large chain family. Type I subfamily. As to quaternary structure, heterohexadecamer of 8 large chains and 8 small chains. Mg(2+) is required as a cofactor.

It is found in the carboxysome. It catalyses the reaction 2 (2R)-3-phosphoglycerate + 2 H(+) = D-ribulose 1,5-bisphosphate + CO2 + H2O. The enzyme catalyses D-ribulose 1,5-bisphosphate + O2 = 2-phosphoglycolate + (2R)-3-phosphoglycerate + 2 H(+). RuBisCO catalyzes two reactions: the carboxylation of D-ribulose 1,5-bisphosphate, the primary event in carbon dioxide fixation, as well as the oxidative fragmentation of the pentose substrate in the photorespiration process. Both reactions occur simultaneously and in competition at the same active site. The protein is Ribulose bisphosphate carboxylase large chain of Synechococcus sp. (strain CC9311).